The sequence spans 162 residues: Caveolin-2 (162 aa).

Topologically, residues 1-86 are cytoplasmic; it reads MGLETEKADV…FEMSKYVIYK (86 aa). Phosphotyrosine; by SRC is present on Y19. Phosphoserine is present on residues S20 and S23. Y27 bears the Phosphotyrosine; by SRC mark. The segment at residues 87 to 107 is an intramembrane region (helical); the sequence is FLTVFLAIPLAFAAGILFATL. The Cytoplasmic segment spans residues 108 to 162; it reads SCLHIWIIMPFVKTCLMVLPSVQTIWKSVTDVVIAPLCTSVGRSFSSVSLQLSHD.

This sequence belongs to the caveolin family. Monomer or homodimer. Interacts with CAV1; the interaction forms a stable heterooligomeric complex that is required for targeting to lipid rafts and for caveolae formation. Tyrosine phosphorylated forms do not form heterooligomers with the Tyr-19-phosphorylated form existing as a monomer or dimer, and the Tyr-27-form as a monomer only. Interacts (tyrosine phosphorylated form) with the SH2 domain-containing proteins, RASA1, NCK1 and SRC. Interacts (tyrosine phosphorylated form) with INSR, the interaction (Tyr-27-phosphorylated form) is increased on insulin stimulation. Interacts (Tyr-19 phosphorylated form) with MAPK1 (phosphorylated form); the interaction, promoted by insulin, leads to nuclear location and MAPK1 activation. Interacts with STAT3; the interaction is increased on insulin-induced tyrosine phosphorylation leading to STAT activation. Post-translationally, phosphorylated on serine and tyrosine residues. CAV1 promotes phosphorylation on Ser-23 which then targets the complex to the plasma membrane, lipid rafts and caveolae. Phosphorylation on both Tyr-19 and Tyr-27 is required for insulin-induced 'Ser-727' phosphorylation of STAT3 and its activation. Phosphorylation on Tyr-19 is required for insulin-induced phosphorylation of MAPK1 and DNA binding of STAT3. Tyrosine phosphorylation is induced by both EGF and insulin.

It localises to the nucleus. The protein resides in the cytoplasm. It is found in the golgi apparatus membrane. Its subcellular location is the cell membrane. The protein localises to the membrane. It localises to the caveola. Its function is as follows. May act as a scaffolding protein within caveolar membranes. Interacts directly with G-protein alpha subunits and can functionally regulate their activity. Acts as an accessory protein in conjunction with CAV1 in targeting to lipid rafts and driving caveolae formation. Positive regulator of cellular mitogenesis of the MAPK signaling pathway. Required for the insulin-stimulated nuclear translocation and activation of MAPK1 and STAT3, and the subsequent regulation of cell cycle progression. In Muntiacus muntjak (Barking deer), this protein is Caveolin-2 (CAV2).